Reading from the N-terminus, the 79-residue chain is Bacteriochlorophyll c-binding protein (79 aa).

His25 is a binding site for a bacteriochlorophyll c.

It belongs to the BChl C/E-binding protein family.

It localises to the chlorosome. The protein localises to the chlorosome envelope. In terms of biological role, component of the photosynthetic apparatus. The light harvesting B740 complex binds bacteriochlorophyll c. This chain is Bacteriochlorophyll c-binding protein (csmA), found in Chlorobaculum tepidum (strain ATCC 49652 / DSM 12025 / NBRC 103806 / TLS) (Chlorobium tepidum).